Reading from the N-terminus, the 351-residue chain is Inhibin beta C chain (351 aa).

Residues M1–V18 form the signal peptide. The propeptide occupies N19–G236. 3 N-linked (GlcNAc...) asparagine glycosylation sites follow: N110, N142, and N160. 4 disulfides stabilise this stretch: C239/C247, C246/C316, C275/C348, and C279/C350.

Belongs to the TGF-beta family. In terms of assembly, homodimeric or heterodimeric through association with alpha and beta subunits, linked by one or more disulfide bonds. Inhibins are heterodimers of one alpha and one beta subunit. Activins are homo- or heterodimers of beta subunits only.

The protein resides in the secreted. Functionally, inhibins and activins inhibit and activate, respectively, the secretion of follitropin by the pituitary gland. Inhibins/activins are involved in regulating a number of diverse functions such as hypothalamic and pituitary hormone secretion, gonadal hormone secretion, germ cell development and maturation, erythroid differentiation, insulin secretion, nerve cell survival, embryonic axial development or bone growth, depending on their subunit composition. Inhibins appear to oppose the functions of activins. This chain is Inhibin beta C chain (Inhbc), found in Rattus norvegicus (Rat).